A 160-amino-acid polypeptide reads, in one-letter code: Putative lipoprotein YfiB (160 aa).

Positions 1-18 are cleaved as a signal peptide; that stretch reads MIKHLVAPLVFTSLILTG. Residue C19 is the site of N-palmitoyl cysteine attachment. Residue C19 is the site of S-diacylglycerol cysteine attachment. Positions 43–160 constitute an OmpA-like domain; sequence AGDWSLGLSD…RRVAVVITTP (118 aa).

The protein belongs to the outer membrane OOP (TC 1.B.6) superfamily.

It is found in the cell membrane. This Escherichia coli (strain K12) protein is Putative lipoprotein YfiB (yfiB).